Here is an 802-residue protein sequence, read N- to C-terminus: Acetyl-CoA decarbonylase/synthase complex subunit alpha 1 (802 aa).

Residues cysteine 68, cysteine 71, cysteine 76, and cysteine 86 each contribute to the [4Fe-4S] cluster site. Histidine 109 lines the CO pocket. Positions 243, 271, and 310 each coordinate [Ni-4Fe-4S] cluster. 2 consecutive 4Fe-4S ferredoxin-type domains span residues 395–424 (DEALMEEINKCTQCMNCVFTCPHSLRVDQG) and 435–464 (SKLAQLEEQCLACMKCEQACPKNIKIINVI). Positions 405, 408, 411, 415, 444, 447, 450, and 454 each coordinate [4Fe-4S] cluster. Positions 512, 541, and 576 each coordinate [Ni-4Fe-4S] cluster.

This sequence belongs to the Ni-containing carbon monoxide dehydrogenase family. In terms of assembly, heterotetramer of two alpha and two epsilon subunits. The ACDS complex is made up of alpha, epsilon, beta, gamma and delta subunits with a probable stoichiometry of (alpha(2)epsilon(2))(4)-beta(8)-(gamma(1)delta(1))(8). Requires [4Fe-4S] cluster as cofactor. The cofactor is [Ni-4Fe-4S] cluster.

It catalyses the reaction CO + 2 oxidized [2Fe-2S]-[ferredoxin] + H2O = 2 reduced [2Fe-2S]-[ferredoxin] + CO2 + 2 H(+). In terms of biological role, part of the ACDS complex that catalyzes the reversible cleavage of acetyl-CoA, allowing autotrophic growth from CO(2). The alpha-epsilon subcomponent functions as a carbon monoxide dehydrogenase. The sequence is that of Acetyl-CoA decarbonylase/synthase complex subunit alpha 1 from Archaeoglobus fulgidus (strain ATCC 49558 / DSM 4304 / JCM 9628 / NBRC 100126 / VC-16).